The primary structure comprises 345 residues: uncharacterized protein (345 aa).

This sequence belongs to the cycloisomerase 2 family.

This is an uncharacterized protein from Staphylococcus saprophyticus subsp. saprophyticus (strain ATCC 15305 / DSM 20229 / NCIMB 8711 / NCTC 7292 / S-41).